A 200-amino-acid chain; its full sequence is Dephospho-CoA kinase (200 aa).

Residues 6-200 (AIALSGGIAT…KIKAKYLEKK (195 aa)) enclose the DPCK domain. 14-19 (ATGKST) provides a ligand contact to ATP.

The protein belongs to the CoaE family.

The protein localises to the cytoplasm. It catalyses the reaction 3'-dephospho-CoA + ATP = ADP + CoA + H(+). It functions in the pathway cofactor biosynthesis; coenzyme A biosynthesis; CoA from (R)-pantothenate: step 5/5. In terms of biological role, catalyzes the phosphorylation of the 3'-hydroxyl group of dephosphocoenzyme A to form coenzyme A. This is Dephospho-CoA kinase from Sulfurimonas denitrificans (strain ATCC 33889 / DSM 1251) (Thiomicrospira denitrificans (strain ATCC 33889 / DSM 1251)).